Here is a 1232-residue protein sequence, read N- to C-terminus: Anion exchange protein 3 (1232 aa).

Residues 1-11 (MANGVIPPPGG) are compositionally biased toward pro residues. Disordered regions lie at residues 1-316 (MANG…KLDR) and 429-498 (NDDK…GDGH). Residues 1–708 (MANGVIPPPG…DLRDALHSQC (708 aa)) are Cytoplasmic-facing. Residues 58–75 (DPEKPSRSYSERDFEFHR) show a composition bias toward basic and acidic residues. 2 stretches are compositionally biased toward basic residues: residues 76-97 (HTSHHTHHPLSARLPPPHKLRR) and 104-113 (RHTRRKRKKE). Acidic residues predominate over residues 134–152 (VDEEEEEEEEEEGESEAEP). Phosphoserine is present on residues Ser167, Ser170, Ser175, and Ser198. The segment covering 200–215 (QHSSSSPSPRARASRL) has biased composition (low complexity). A compositionally biased stretch (basic and acidic residues) spans 267 to 279 (DDMKSHRLEDNPG). Residues 280-289 (VRRHLVKKPS) are compositionally biased toward basic residues. At Arg295 the chain carries Omega-N-methylarginine. Residues 305 to 316 (LRRKKKKKKLDR) are compositionally biased toward basic residues. A compositionally biased stretch (polar residues) spans 440–450 (NPSSSSMNSVL). Positions 481 to 498 (HDPDAKEKPLHMPGGDGH) are enriched in basic and acidic residues. 5 helical membrane passes run 709–731 (VAAVLFIYFAALSPAITFGGLLG), 737–774 (LMGVSELIVSTAVLGVLFSLLGAQPLLVVGFSGPLLVF), 794–816 (VWVGLWLVVFVLALVAAEGSFLV), 826–847 (IFAFLISLIFIYETFYKLYKVF), and 893–910 (ALLSLILMLGTFFIAFFL). Residues 709–1232 (VAAVLFIYFA…DEYNELHMPV (524 aa)) are membrane (anion exchange). Residues 911–925 (RKFRNSRFLGGKARR) lie on the Cytoplasmic side of the membrane. Helical transmembrane passes span 926–946 (IIGDFGIPISILVMVLVDYSI), 980–1002 (PFPPWMMVAAAVPALLVLILIFM), 1028–1049 (LLLIGSLGGLCGLFGLPWLTAA), 1083–1128 (VTGV…IQLS), and 1155–1191 (MHLFTCIQLGCIALLWVVKSTAASLAFPFLLLLTVPL). Cys1165 carries the S-palmitoyl cysteine lipid modification.

It belongs to the anion exchanger (TC 2.A.31) family. In terms of tissue distribution, expressed in the heart.

It localises to the cell membrane. It catalyses the reaction hydrogencarbonate(in) + chloride(out) = hydrogencarbonate(out) + chloride(in). Sodium-independent anion exchanger which mediates the electroneutral exchange of chloride for bicarbonate ions across the cell membrane. May be involved in the regulation of intracellular pH, and the modulation of cardiac action potential. This Homo sapiens (Human) protein is Anion exchange protein 3 (SLC4A3).